The sequence spans 150 residues: Snaclec 7 (150 aa).

A signal peptide spans 1–23 (MGRFISISFGLLVVFLSLSGTGA). 3 disulfides stabilise this stretch: Cys27/Cys38, Cys55/Cys144, and Cys121/Cys136. Residues 34–145 (YEGYCYKVFN…CNDPRYFVCK (112 aa)) form the C-type lectin domain.

It belongs to the snaclec family. As to quaternary structure, heterodimer; disulfide-linked.

The protein localises to the secreted. Functionally, interferes with one step of hemostasis (modulation of platelet aggregation, or coagulation cascade, for example). The protein is Snaclec 7 of Daboia siamensis (Eastern Russel's viper).